The following is a 216-amino-acid chain: Probable RNA 2'-phosphotransferase 2 (216 aa).

The protein belongs to the KptA/TPT1 family.

In terms of biological role, removes the 2'-phosphate from RNA via an intermediate in which the phosphate is ADP-ribosylated by NAD followed by a presumed transesterification to release the RNA and generate ADP-ribose 1''-2''-cyclic phosphate (APPR&gt;P). May function as an ADP-ribosylase. The sequence is that of Probable RNA 2'-phosphotransferase 2 (kptA2) from Archaeoglobus fulgidus (strain ATCC 49558 / DSM 4304 / JCM 9628 / NBRC 100126 / VC-16).